The sequence spans 342 residues: Transmembrane protein 115 homolog (342 aa).

Over 1-21 (MQYSSRFLELNIPDSFLNINK) the chain is Cytoplasmic. A helical membrane pass occupies residues 22 to 42 (IPDATKFITVTYICLTATLFC). Residues 43–121 (IRRSLYNKLV…NWNSSKEMFK (79 aa)) are Lumenal-facing. Residue Asn114 is glycosylated (N-linked (GlcNAc...) asparagine). Residues 122–142 (FIIVLGSLTNVLIIMLTLLVS) form a helical membrane-spanning segment. At 143–159 (FFSNKVRLDIPLDGNYT) the chain is on the cytoplasmic side. A helical membrane pass occupies residues 160 to 180 (ILIGFPIIYRQLLPETTIIHL). Residues 181-207 (KTPQFLAKNFRFKLLPIFVMFTMTVTQ) lie on the Lumenal side of the membrane. A helical transmembrane segment spans residues 208 to 228 (IIWFHHFAQLFSIWVTFFASW). Topologically, residues 229–342 (SYLRFFQKLA…QVLEERMVNP (114 aa)) are cytoplasmic.

This sequence belongs to the TMEM115 family. In terms of assembly, homooligomer.

Its subcellular location is the golgi apparatus membrane. In terms of biological role, may play a role in retrograde transport of proteins from the Golgi to the endoplasmic reticulum. In Saccharomyces cerevisiae (strain ATCC 204508 / S288c) (Baker's yeast), this protein is Transmembrane protein 115 homolog.